Reading from the N-terminus, the 269-residue chain is MTVLDSILDGVRADVAAREAVLDFAAVKAAAAAAPPALDAAAALLEPGIGVIAEVKRASPSKGALADITDPAELAAAYQAGGARVISVLTEERRFQGSLADLDAVRRAVSIPILRKDFIVGPYQIHEARAHGADVVLLIVAALEQDALASLIDRTESLGMTALVEVHTEEEANRALEAGAKVIGVNARNLKTLEVDKNTFGEIAPGLPTEIIKIAESGVRGTADLLAYAGAGADAVLVGEGLVTSGDPRKAVADLVNAGAHPSCPKPSR.

The protein belongs to the TrpC family.

The catalysed reaction is 1-(2-carboxyphenylamino)-1-deoxy-D-ribulose 5-phosphate + H(+) = (1S,2R)-1-C-(indol-3-yl)glycerol 3-phosphate + CO2 + H2O. It participates in amino-acid biosynthesis; L-tryptophan biosynthesis; L-tryptophan from chorismate: step 4/5. This is Indole-3-glycerol phosphate synthase from Rhodococcus jostii (strain RHA1).